A 241-amino-acid chain; its full sequence is CRISPR-associated endoribonuclease Cas6 2 (241 aa).

The active-site Proton acceptor is the tyrosine 28. Histidine 40 (proton donor) is an active-site residue.

This sequence belongs to the CRISPR-associated protein Cas6/Cse3/CasE family.

CRISPR (clustered regularly interspaced short palindromic repeat) is an adaptive immune system that provides protection against mobile genetic elements (viruses, transposable elements and conjugative plasmids). CRISPR clusters contain sequences complementary to antecedent mobile elements and target invading nucleic acids. CRISPR clusters are transcribed and processed into CRISPR RNA (crRNA). This protein processes pre-crRNA into individual crRNA units. The sequence is that of CRISPR-associated endoribonuclease Cas6 2 (cas6b) from Methanocaldococcus jannaschii (strain ATCC 43067 / DSM 2661 / JAL-1 / JCM 10045 / NBRC 100440) (Methanococcus jannaschii).